The sequence spans 652 residues: DNA ligase (652 aa).

Residues 29-33 (DSEYD), 78-79 (SL), and E107 each bind NAD(+). K109 serves as the catalytic N6-AMP-lysine intermediate. Positions 130, 164, 278, and 302 each coordinate NAD(+). C395, C398, C413, and C418 together coordinate Zn(2+). Residues 577–652 (VADAALSGLT…VRDEAWLESL (76 aa)) form the BRCT domain.

Belongs to the NAD-dependent DNA ligase family. LigA subfamily. The cofactor is Mg(2+). Mn(2+) is required as a cofactor.

It carries out the reaction NAD(+) + (deoxyribonucleotide)n-3'-hydroxyl + 5'-phospho-(deoxyribonucleotide)m = (deoxyribonucleotide)n+m + AMP + beta-nicotinamide D-nucleotide.. Functionally, DNA ligase that catalyzes the formation of phosphodiester linkages between 5'-phosphoryl and 3'-hydroxyl groups in double-stranded DNA using NAD as a coenzyme and as the energy source for the reaction. It is essential for DNA replication and repair of damaged DNA. This is DNA ligase from Streptococcus pneumoniae (strain Hungary19A-6).